A 171-amino-acid polypeptide reads, in one-letter code: uncharacterized protein (171 aa).

The interval 56–83 (TVGVNKNAKNGPTQSQTRSGSAGAQARM) is disordered. Positions 57–77 (VGVNKNAKNGPTQSQTRSGSA) are enriched in polar residues. A J domain is found at 113 to 170 (KAFETLGLGASATTADIKAAYKDLVKKHHPDANGGDRGSEERFRAVIQAYQLLKQAGF).

This is an uncharacterized protein from Sinorhizobium sp.